Reading from the N-terminus, the 893-residue chain is Sulfate permease 2 (893 aa).

The tract at residues 1-25 (MSREGYPNFEEVEIPDFQETNNTVP) is disordered. At 1 to 131 (MSREGYPNFE…VFPIINWLPH (131 aa)) the chain is on the cytoplasmic side. Residues 132 to 152 (YNFSWFTADLIAGITIGCVLV) form a helical membrane-spanning segment. Residues 153 to 163 (PQSMSYAQVAT) lie on the Extracellular side of the membrane. Residues 164–184 (LPAQYGLYSSFIGAYSYSFFA) traverse the membrane as a helical segment. Over 185–188 (TSKD) the chain is Cytoplasmic. Residues 189 to 209 (VCIGPVAVMSLQTAKVIADVT) form a helical membrane-spanning segment. Topologically, residues 210–221 (AKYPDGDSAITG) are extracellular. The chain crosses the membrane as a helical span at residues 222–242 (PVIATTLALLCGIISAAVGFL). Residues 243–244 (RL) are Cytoplasmic-facing. A helical membrane pass occupies residues 245–265 (GFLVELISLNAVAGFMTGSAF). At 266 to 305 (NILWGQVPALMGYNSLVNTRAATYKVVIETLKHLPDTKLD) the chain is on the extracellular side. The chain crosses the membrane as a helical span at residues 306 to 326 (AVFGLIPLFLLYVWKWWCGTY). Residues 327–350 (GPRLNDRYNSKNPRLHKIIKWTYF) lie on the Cytoplasmic side of the membrane. The helical transmembrane segment at 351–371 (YAQASRNGIIIIVFTCIGWAI) threads the bilayer. The Extracellular segment spans residues 372–399 (TRGKSKSERPISILGSVPSGLKEVGVFH). Residues 400 to 420 (VPPGLMSKLGPNLPASIIVLL) traverse the membrane as a helical segment. Residues 421-443 (LEHIAISKSFGRINDYKVVPDQE) lie on the Cytoplasmic side of the membrane. The chain crosses the membrane as a helical span at residues 444–464 (LIAIGVSNLLGTFFNAYPATG). Over 465-483 (SFSRSALKAKCNVRTPLSG) the chain is Extracellular. A helical membrane pass occupies residues 484–504 (LFSGSCVLLALYCLTGAFFYI). Over 505–532 (PKATLSAVIIHAVSDLLASYQTTWNFWK) the chain is Cytoplasmic. Residues 533–551 (MNPLDFICFIVTVLITVFA) traverse the membrane as a helical segment. The Extracellular segment spans residues 552–559 (SIEDGIYF). Residues 560–580 (AMCWSCAMLILKVAFPAGKFL) form a helical membrane-spanning segment. Topologically, residues 581 to 893 (GRVEVAEVTD…DIPDFAKWDI (313 aa)) are cytoplasmic. Positions 676–854 (DVQILPPPDG…SIVAGHTSYH (179 aa)) constitute an STAS domain.

It belongs to the SLC26A/SulP transporter (TC 2.A.53) family.

It is found in the membrane. High affinity uptake of sulfate into the cell. In Saccharomyces cerevisiae (strain ATCC 204508 / S288c) (Baker's yeast), this protein is Sulfate permease 2 (SUL2).